Reading from the N-terminus, the 123-residue chain is Kininogen (123 aa).

Post-translationally, bradykinin is released from kininogen by kallikrein. In terms of processing, N-glycosylated. Contains sulfated N-acetylglucosamine and O-acetylated sialic acids as terminal elements on biantennary and triantennary N-glycans.

Inhibits papain and ficin (cysteine proteinases) but not trypsin (a serine proteinase). This chain is Kininogen, found in Gadus morhua (Atlantic cod).